A 407-amino-acid chain; its full sequence is Actinorhodin polyketide putative beta-ketoacyl synthase 2 (407 aa).

A Ketosynthase family 3 (KS3) domain is found at Met-1–Arg-402.

Belongs to the thiolase-like superfamily. Beta-ketoacyl-ACP synthases family.

This chain is Actinorhodin polyketide putative beta-ketoacyl synthase 2, found in Streptomyces coelicolor (strain ATCC BAA-471 / A3(2) / M145).